A 437-amino-acid chain; its full sequence is Enolase (437 aa).

Residue Q162 participates in (2R)-2-phosphoglycerate binding. E204 acts as the Proton donor in catalysis. Mg(2+) contacts are provided by D251, E297, and D324. (2R)-2-phosphoglycerate-binding residues include K349, R378, S379, and K400. The active-site Proton acceptor is the K349.

It belongs to the enolase family. Mg(2+) is required as a cofactor.

It localises to the cytoplasm. The protein localises to the secreted. The protein resides in the cell surface. The enzyme catalyses (2R)-2-phosphoglycerate = phosphoenolpyruvate + H2O. It participates in carbohydrate degradation; glycolysis; pyruvate from D-glyceraldehyde 3-phosphate: step 4/5. In terms of biological role, catalyzes the reversible conversion of 2-phosphoglycerate (2-PG) into phosphoenolpyruvate (PEP). It is essential for the degradation of carbohydrates via glycolysis. This chain is Enolase, found in Prosthecochloris aestuarii (strain DSM 271 / SK 413).